The primary structure comprises 530 residues: Copine-D (530 aa).

C2 domains follow at residues 1–122 (MNPI…RMKM) and 130–248 (LSGS…EFEI). Residues Asp-25, Asp-31, Asp-85, Asp-87, and Asp-100 each contribute to the Ca(2+) site. Residues 289–507 (NLMVAIDCTA…ALAHETLKEI (219 aa)) form the VWFA domain.

The protein belongs to the copine family. Ca(2+) is required as a cofactor.

This is Copine-D (cpnD) from Dictyostelium discoideum (Social amoeba).